We begin with the raw amino-acid sequence, 325 residues long: GMP reductase (325 aa).

Catalysis depends on Cys173, which acts as the Thioimidate intermediate. 202 to 225 (IIADGGIRHHGDIAKSVRFGAAMV) is a binding site for NADP(+).

This sequence belongs to the IMPDH/GMPR family. GuaC type 2 subfamily.

It catalyses the reaction IMP + NH4(+) + NADP(+) = GMP + NADPH + 2 H(+). Catalyzes the irreversible NADPH-dependent deamination of GMP to IMP. It functions in the conversion of nucleobase, nucleoside and nucleotide derivatives of G to A nucleotides, and in maintaining the intracellular balance of A and G nucleotides. In Leptothrix cholodnii (strain ATCC 51168 / LMG 8142 / SP-6) (Leptothrix discophora (strain SP-6)), this protein is GMP reductase.